The following is a 212-amino-acid chain: Protein-L-isoaspartate O-methyltransferase (212 aa).

Residue Ser-56 is part of the active site.

It belongs to the methyltransferase superfamily. L-isoaspartyl/D-aspartyl protein methyltransferase family.

It is found in the cytoplasm. The enzyme catalyses [protein]-L-isoaspartate + S-adenosyl-L-methionine = [protein]-L-isoaspartate alpha-methyl ester + S-adenosyl-L-homocysteine. Functionally, catalyzes the methyl esterification of L-isoaspartyl residues in peptides and proteins that result from spontaneous decomposition of normal L-aspartyl and L-asparaginyl residues. It plays a role in the repair and/or degradation of damaged proteins. The protein is Protein-L-isoaspartate O-methyltransferase of Myxococcus xanthus (strain DK1622).